We begin with the raw amino-acid sequence, 339 residues long: Ketol-acid reductoisomerase (NADP(+)) (339 aa).

Positions methionine 1–threonine 182 constitute a KARI N-terminal Rossmann domain. NADP(+)-binding positions include tyrosine 24 to glutamine 27, arginine 48, serine 51, serine 53, and aspartate 83 to glutamine 86. Residue histidine 108 is part of the active site. Glycine 134 contacts NADP(+). One can recognise a KARI C-terminal knotted domain in the interval serine 183 to isoleucine 328. Mg(2+) is bound by residues aspartate 191, glutamate 195, glutamate 227, and glutamate 231. A substrate-binding site is contributed by serine 252.

It belongs to the ketol-acid reductoisomerase family. Mg(2+) is required as a cofactor.

The catalysed reaction is (2R)-2,3-dihydroxy-3-methylbutanoate + NADP(+) = (2S)-2-acetolactate + NADPH + H(+). It carries out the reaction (2R,3R)-2,3-dihydroxy-3-methylpentanoate + NADP(+) = (S)-2-ethyl-2-hydroxy-3-oxobutanoate + NADPH + H(+). It participates in amino-acid biosynthesis; L-isoleucine biosynthesis; L-isoleucine from 2-oxobutanoate: step 2/4. The protein operates within amino-acid biosynthesis; L-valine biosynthesis; L-valine from pyruvate: step 2/4. Its function is as follows. Involved in the biosynthesis of branched-chain amino acids (BCAA). Catalyzes an alkyl-migration followed by a ketol-acid reduction of (S)-2-acetolactate (S2AL) to yield (R)-2,3-dihydroxy-isovalerate. In the isomerase reaction, S2AL is rearranged via a Mg-dependent methyl migration to produce 3-hydroxy-3-methyl-2-ketobutyrate (HMKB). In the reductase reaction, this 2-ketoacid undergoes a metal-dependent reduction by NADPH to yield (R)-2,3-dihydroxy-isovalerate. This chain is Ketol-acid reductoisomerase (NADP(+)), found in Afipia carboxidovorans (strain ATCC 49405 / DSM 1227 / KCTC 32145 / OM5) (Oligotropha carboxidovorans).